The primary structure comprises 155 residues: Ribosome maturation factor RimP (155 aa).

Belongs to the RimP family.

It localises to the cytoplasm. Required for maturation of 30S ribosomal subunits. The polypeptide is Ribosome maturation factor RimP (Listeria monocytogenes serotype 4a (strain HCC23)).